A 660-amino-acid polypeptide reads, in one-letter code: Methionine--tRNA ligase 1 (660 aa).

A 'HIGH' region motif is present at residues 15 to 25; that stretch reads YYPSGKLHIGH. Positions 310 to 314 match the 'KMSKS' region motif; sequence KMSKS. An ATP-binding site is contributed by Lys313. In terms of domain architecture, tRNA-binding spans 560–660; the sequence is DFFKVELRVA…QNLPNGTKIK (101 aa).

Belongs to the class-I aminoacyl-tRNA synthetase family. MetG type 2B subfamily. As to quaternary structure, homodimer.

It localises to the cytoplasm. The catalysed reaction is tRNA(Met) + L-methionine + ATP = L-methionyl-tRNA(Met) + AMP + diphosphate. Functionally, is required not only for elongation of protein synthesis but also for the initiation of all mRNA translation through initiator tRNA(fMet) aminoacylation. This is Methionine--tRNA ligase 1 from Bacillus cereus (strain ATCC 14579 / DSM 31 / CCUG 7414 / JCM 2152 / NBRC 15305 / NCIMB 9373 / NCTC 2599 / NRRL B-3711).